A 288-amino-acid chain; its full sequence is Acetyl-coenzyme A carboxylase carboxyl transferase subunit beta (288 aa).

A CoA carboxyltransferase N-terminal domain is found at 34-288 (LFAKCPACKH…HLVAFHGGGQ (255 aa)). Residues cysteine 38, cysteine 41, cysteine 56, and cysteine 59 each coordinate Zn(2+). Residues 38-59 (CPACKHMIYKKDLGLAKICPTC) form a C4-type zinc finger.

Belongs to the AccD/PCCB family. In terms of assembly, acetyl-CoA carboxylase is a heterohexamer composed of biotin carboxyl carrier protein (AccB), biotin carboxylase (AccC) and two subunits each of ACCase subunit alpha (AccA) and ACCase subunit beta (AccD). Requires Zn(2+) as cofactor.

The protein localises to the cytoplasm. It carries out the reaction N(6)-carboxybiotinyl-L-lysyl-[protein] + acetyl-CoA = N(6)-biotinyl-L-lysyl-[protein] + malonyl-CoA. It functions in the pathway lipid metabolism; malonyl-CoA biosynthesis; malonyl-CoA from acetyl-CoA: step 1/1. In terms of biological role, component of the acetyl coenzyme A carboxylase (ACC) complex. Biotin carboxylase (BC) catalyzes the carboxylation of biotin on its carrier protein (BCCP) and then the CO(2) group is transferred by the transcarboxylase to acetyl-CoA to form malonyl-CoA. This is Acetyl-coenzyme A carboxylase carboxyl transferase subunit beta from Streptococcus pyogenes serotype M1.